A 347-amino-acid polypeptide reads, in one-letter code: NADH-ubiquinone oxidoreductase chain 2 (347 aa).

Transmembrane regions (helical) follow at residues 3 to 23 (PLIF…VMIS), 25 to 45 (HWLM…PVLM), 59 to 79 (YFLT…INLL), 96 to 116 (IIMT…FWVP), 122 to 142 (VSLT…LSVL), 145 to 165 (IAPV…IMIG), 178 to 198 (ILAY…IFNP), 202 to 222 (LLNL…FMTV), 240 to 260 (ITTS…LTGF), 276 to 296 (IILA…YMRL), and 326 to 346 (LSPL…MMIL).

This sequence belongs to the complex I subunit 2 family. In terms of assembly, core subunit of respiratory chain NADH dehydrogenase (Complex I) which is composed of 45 different subunits. Interacts with TMEM242.

Its subcellular location is the mitochondrion inner membrane. It catalyses the reaction a ubiquinone + NADH + 5 H(+)(in) = a ubiquinol + NAD(+) + 4 H(+)(out). Its function is as follows. Core subunit of the mitochondrial membrane respiratory chain NADH dehydrogenase (Complex I) which catalyzes electron transfer from NADH through the respiratory chain, using ubiquinone as an electron acceptor. Essential for the catalytic activity and assembly of complex I. This chain is NADH-ubiquinone oxidoreductase chain 2, found in Peropteryx macrotis (Lesser dog-like bat).